We begin with the raw amino-acid sequence, 1156 residues long: Mastermind-like protein 2 (1156 aa).

Positions 81–165 (QHGQGARKAG…PPASTPGDQR (85 aa)) are disordered. The span at 113–122 (PAASQAAATA) shows a compositional bias: low complexity. Polar residues predominate over residues 153–165 (EQQPPASTPGDQR). Ser175 bears the Phosphoserine mark. Disordered stretches follow at residues 340–359 (FNID…SLPM), 369–506 (SPGL…GSGQ), 531–630 (QQKP…QQQQ), 658–680 (QQQQ…QPLL), 705–743 (YQVS…GYMN), 784–820 (IAPQ…YSGG), and 1059–1100 (LPNL…FQGT). Composition is skewed to polar residues over residues 344–354 (LGQQSQRSTPR), 371–380 (GLTQGPSGSP), 393–419 (MANS…TGSG), and 428–437 (QEVSHAQQLK). A compositionally biased stretch (low complexity) spans 440-470 (AANRQQHARMQQHQQQHQPTNWSALPSSAGP). Composition is skewed to polar residues over residues 484–496 (SFGQ…QSSP), 532–543 (QKPQDLSRSFIN), and 563–587 (NSDQ…LHYT). The span at 588 to 630 (QQQQQQQQQQQQQQQQQQQQQQQQQQQQQQQQQQSSISAQQQQ) shows a compositional bias: low complexity. Composition is skewed to low complexity over residues 706-725 (QVSQ…NTGP) and 733-743 (SNPNTGSGYMN). A compositionally biased stretch (polar residues) spans 807–820 (NVGNMQPTAQYSGG).

Belongs to the mastermind family. Interacts through its N-terminal region with the ankyrin repeat region of the Notch proteins NOTCH1, NOTCH2, NOTCH3 and NOTCH4. Forms a DNA-binding complex with Notch proteins and RBPSUH/RBP-J kappa. In terms of tissue distribution, widely expressed with high levels detected in placenta, salivary gland and skeletal muscle.

The protein resides in the nucleus speckle. Functionally, acts as a transcriptional coactivator for NOTCH proteins. Has been shown to amplify NOTCH-induced transcription of HES1. Potentiates activation by NOTCH3 and NOTCH4 more efficiently than MAML1 or MAML3. The protein is Mastermind-like protein 2 (MAML2) of Homo sapiens (Human).